The chain runs to 259 residues: Indole-3-glycerol phosphate synthase (259 aa).

The protein belongs to the TrpC family.

It carries out the reaction 1-(2-carboxyphenylamino)-1-deoxy-D-ribulose 5-phosphate + H(+) = (1S,2R)-1-C-(indol-3-yl)glycerol 3-phosphate + CO2 + H2O. The protein operates within amino-acid biosynthesis; L-tryptophan biosynthesis; L-tryptophan from chorismate: step 4/5. The sequence is that of Indole-3-glycerol phosphate synthase from Dehalococcoides mccartyi (strain CBDB1).